The following is a 763-amino-acid chain: MFMRLKVLEMNSIRRQTLLRQFTNVYNVVSRSARLCSQAIPKRLFYSTGSRANSIPDALSRLRNIGISAHIDSGKTTFTERVLFYTGRIKDIHEVRGKDNVGAKMDSMELEREKGITIQSAATYCNWKRKQKDGDEQDYIINIIDTPGHIDFTIEVERALRVLDGAVLILCAVSGVQSQTITVDRQMRRYNVPRITFINKMDRMGANPWRAIEQLNAKLRIAAAAVQIPIGSEDNLEGVVDLIHMQSIYNRGKKGEKVEITGSIPEHLKELANEKRALLIETLANIDEEIGELYVMEETPSPEQLMSAIRSATLSRQFTPVFMGSALANIGVQPLLDAVCDYLPNPSDVTNTALDVNQGEKSVTLHTDYNEPLVALAFKLEDGRFGQLTYMRVYQGVLKRGNQITNVNSGKRIKVPRLVLLHSDEMEDVEEAPAGSICAMFGVDCASGDTFTDGSIKYVMSSMYVPEPVVSLSIKPKNKDSPNFSKALARFQREDPTFRVHIDKESNETIISGMGELHLEIYLERLAREYRTECITGKPRVAFRETITTKAPFSYLHKKQSGGAGQYAKVEGYIEYMEPKEDGNGRLVDHEFVNHVVGGAIPSQYIPACEKAFKECLERGFLTGHPIKNCRLVLEDGAAHSVDSSELAFRVALTHAFRQAFMAAKPIVLEPIMNVTVTAPVDDQGVVIGNLDKRKATIVNTDIGEEEFTLQAEVPLNSMFSYSSDIRSSTQGKGEFTMEFLKYLPAPGYVQKELIAEYEKQHK.

Residues 1-52 (MFMRLKVLEMNSIRRQTLLRQFTNVYNVVSRSARLCSQAIPKRLFYSTGSRA) constitute a mitochondrion transit peptide. Positions 60-347 (SRLRNIGISA…AVCDYLPNPS (288 aa)) constitute a tr-type G domain. GTP contacts are provided by residues 69–76 (AHIDSGKT), 145–149 (DTPGH), and 199–202 (NKMD).

The protein belongs to the TRAFAC class translation factor GTPase superfamily. Classic translation factor GTPase family. EF-G/EF-2 subfamily.

The protein localises to the mitochondrion. The protein operates within protein biosynthesis; polypeptide chain elongation. Functionally, mitochondrial GTPase that catalyzes the GTP-dependent ribosomal translocation step during translation elongation. During this step, the ribosome changes from the pre-translocational (PRE) to the post-translocational (POST) state as the newly formed A-site-bound peptidyl-tRNA and P-site-bound deacylated tRNA move to the P and E sites, respectively. Catalyzes the coordinated movement of the two tRNA molecules, the mRNA and conformational changes in the ribosome. This Schizosaccharomyces japonicus (strain yFS275 / FY16936) (Fission yeast) protein is Elongation factor G, mitochondrial (mef1).